The sequence spans 367 residues: MDKEYVGFAALPNQLHRKSVKKGFDFTLMVAGESGLGKSTLINSLFLTNLYEDRQIPEASARLTQTLTIERRGVEIEEGGIKVKLTVVDTPGFGDSVDCSDCWLPVVRFIEEQFEQYLRDESGLNRKNIQDSRVHCCLYFISPFGRGLRPLDVAFLRAVHEKVNIIPVIGKADALMPKETQALKQKIREQLKEEEINIYQFPECDSDEDEDFKRQDAEMKESIPFAVVGSCEVVRDGGPRPVRGRHYSWGTVEVENPHHCDFLNLRRMLVQTHLQDLKEVTHDLLYEGYRARCLQSLARPGARDRASRSKLSRQSATEIPLPMLPLADTEKLIREKDEELRRMQEMLEKMQAQMQLSQAQGEQSDAL.

Residues 22–296 (KGFDFTLMVA…EGYRARCLQS (275 aa)) enclose the Septin-type G domain. A G1 motif region spans residues 32–39 (GESGLGKS). GTP-binding positions include 32–39 (GESGLGKS), threonine 66, glycine 92, and 171–179 (KADALMPKE). Residues 89–92 (DTPG) form a G3 motif region. A G4 motif region spans residues 170-173 (GKAD). Position 206 is a phosphoserine (serine 206). Glycine 229 and arginine 245 together coordinate GTP. Position 248 is a phosphoserine; by AURKB (serine 248). Threonine 251 is modified (phosphothreonine). A phosphoserine; by AURKB mark is found at serine 307 and serine 315.

It belongs to the TRAFAC class TrmE-Era-EngA-EngB-Septin-like GTPase superfamily. Septin GTPase family. Septins polymerize into heterooligomeric protein complexes that form filaments, and can associate with cellular membranes, actin filaments and microtubules. GTPase activity is required for filament formation. Interacts with AURKB.

It localises to the cytoplasm. It is found in the cytoskeleton. The protein resides in the microtubule organizing center. The protein localises to the centrosome. Its subcellular location is the midbody. Its function is as follows. Filament-forming cytoskeletal GTPase. May play a role in cytokinesis (Potential). The chain is Septin-1 from Bos taurus (Bovine).